Consider the following 361-residue polypeptide: Cilia- and flagella-associated protein 263 (361 aa).

It belongs to the CFAP263 family. Forms a complex with CFAP184; the interaction is required for functional activity in cilia.

It localises to the cell projection. It is found in the cilium. Functionally, in complex with CFAP263, acts as a regulator of ciliary beating that connects radial spoke 3 (RS3) to the inner dynein arm (IDA) and the nexin-dynein regulatory complex (N-DRC). The complex is positioned parallel to N-DRC and forms a connection between the arch at the base of RS3, the IDA tail and N-DRC. The polypeptide is Cilia- and flagella-associated protein 263 (CFAP263) (Tetrahymena thermophila (strain SB210)).